The primary structure comprises 806 residues: Polyribonucleotide nucleotidyltransferase (806 aa).

The Mg(2+) site is built by D488 and D494. The region spanning 555 to 614 (PQIRTVQIPTDKIRDLIGPGGKTIRGIIEATQVKIDVDDTGRVNIASSDEEGLKKALAMI) is the KH domain. Positions 624–691 (GKTYLGKVVR…EGNRIKLSRK (68 aa)) constitute an S1 motif domain. The disordered stretch occupies residues 698-806 (RQKLGLPEPG…QGGGGNRGPQ (109 aa)). A compositionally biased stretch (low complexity) spans 704–717 (PEPGAEAPAAAEGQ). Positions 738-757 (GGEDFDDFDEEGGEGEGEDE) are enriched in acidic residues. Residues 758-774 (NFNREDTPNSAPGERRP) are compositionally biased toward basic and acidic residues. The span at 783–792 (RGRRRRRGRG) shows a compositional bias: basic residues. The segment covering 793-806 (RGPGQGGGGNRGPQ) has biased composition (gly residues).

It belongs to the polyribonucleotide nucleotidyltransferase family. The cofactor is Mg(2+).

It is found in the cytoplasm. The enzyme catalyses RNA(n+1) + phosphate = RNA(n) + a ribonucleoside 5'-diphosphate. In terms of biological role, involved in mRNA degradation. Catalyzes the phosphorolysis of single-stranded polyribonucleotides processively in the 3'- to 5'-direction. This is Polyribonucleotide nucleotidyltransferase from Acidobacterium capsulatum (strain ATCC 51196 / DSM 11244 / BCRC 80197 / JCM 7670 / NBRC 15755 / NCIMB 13165 / 161).